The primary structure comprises 374 residues: DNA/RNA-binding protein ALBA4 (374 aa).

It belongs to the histone-like Alba family.

Its subcellular location is the cytoplasm. The protein localises to the cell cortex. The protein resides in the perinuclear region. In terms of biological role, possesses DNA- and RNA-binding activities. Binds to DNA with relaxed sequence specificity. May associate with the subtelomeric TARE6 repeats. Regulates the abundance of transcript sub-populations in a stage-specific manner. Regulates activation of male gametocytes. Participates in the coordination of sporozoite development in the oocyst. The protein is DNA/RNA-binding protein ALBA4 of Plasmodium yoelii yoelii.